A 337-amino-acid chain; its full sequence is GTPase Obg (337 aa).

An Obg domain is found at 1–161 (MNLTDNAVIF…FKIKLDFVFL (161 aa)). The region spanning 162–333 (ADVGLFGYSN…LINKILLFLE (172 aa)) is the OBG-type G domain. Residues 168–175 (GYSNTGRS), 193–197 (FTTLF), 214–217 (DIPS), 282–285 (NKTD), and 314–316 (SLN) contribute to the GTP site. Mg(2+) contacts are provided by Ser175 and Thr195.

It belongs to the TRAFAC class OBG-HflX-like GTPase superfamily. OBG GTPase family. In terms of assembly, monomer. It depends on Mg(2+) as a cofactor.

Its subcellular location is the cytoplasm. An essential GTPase which binds GTP, GDP and possibly (p)ppGpp with moderate affinity, with high nucleotide exchange rates and a fairly low GTP hydrolysis rate. Plays a role in control of the cell cycle, stress response, ribosome biogenesis and in those bacteria that undergo differentiation, in morphogenesis control. The polypeptide is GTPase Obg (Wigglesworthia glossinidia brevipalpis).